Consider the following 177-residue polypeptide: Large ribosomal subunit protein uL6 (177 aa).

It belongs to the universal ribosomal protein uL6 family. In terms of assembly, part of the 50S ribosomal subunit.

In terms of biological role, this protein binds to the 23S rRNA, and is important in its secondary structure. It is located near the subunit interface in the base of the L7/L12 stalk, and near the tRNA binding site of the peptidyltransferase center. This is Large ribosomal subunit protein uL6 from Azorhizobium caulinodans (strain ATCC 43989 / DSM 5975 / JCM 20966 / LMG 6465 / NBRC 14845 / NCIMB 13405 / ORS 571).